Reading from the N-terminus, the 95-residue chain is Protein TusB (95 aa).

Belongs to the DsrH/TusB family. Heterohexamer, formed by a dimer of trimers. The hexameric TusBCD complex contains 2 copies each of TusB, TusC and TusD. The TusBCD complex interacts with TusE.

It is found in the cytoplasm. Functionally, part of a sulfur-relay system required for 2-thiolation of 5-methylaminomethyl-2-thiouridine (mnm(5)s(2)U) at tRNA wobble positions. This chain is Protein TusB, found in Photorhabdus laumondii subsp. laumondii (strain DSM 15139 / CIP 105565 / TT01) (Photorhabdus luminescens subsp. laumondii).